Here is a 299-residue protein sequence, read N- to C-terminus: UDP-N-acetylenolpyruvoylglucosamine reductase (299 aa).

The region spanning 28-193 (IGGPVDLMVL…VSALMQLHKE (166 aa)) is the FAD-binding PCMH-type domain. The active site involves arginine 172. The active-site Proton donor is the serine 222. Glutamate 292 is a catalytic residue.

This sequence belongs to the MurB family. Requires FAD as cofactor.

Its subcellular location is the cytoplasm. It carries out the reaction UDP-N-acetyl-alpha-D-muramate + NADP(+) = UDP-N-acetyl-3-O-(1-carboxyvinyl)-alpha-D-glucosamine + NADPH + H(+). It functions in the pathway cell wall biogenesis; peptidoglycan biosynthesis. Cell wall formation. The chain is UDP-N-acetylenolpyruvoylglucosamine reductase from Syntrophomonas wolfei subsp. wolfei (strain DSM 2245B / Goettingen).